A 359-amino-acid polypeptide reads, in one-letter code: 3-dehydroquinate synthase (359 aa).

NAD(+) is bound by residues 70–75 (DGEQYK), 105–109 (GVIGD), 129–130 (TT), lysine 142, lysine 151, and 169–172 (FYKT). Glutamate 184, histidine 247, and histidine 264 together coordinate Zn(2+).

It belongs to the sugar phosphate cyclases superfamily. Dehydroquinate synthase family. It depends on Co(2+) as a cofactor. Requires Zn(2+) as cofactor. The cofactor is NAD(+).

It localises to the cytoplasm. The enzyme catalyses 7-phospho-2-dehydro-3-deoxy-D-arabino-heptonate = 3-dehydroquinate + phosphate. It functions in the pathway metabolic intermediate biosynthesis; chorismate biosynthesis; chorismate from D-erythrose 4-phosphate and phosphoenolpyruvate: step 2/7. Its function is as follows. Catalyzes the conversion of 3-deoxy-D-arabino-heptulosonate 7-phosphate (DAHP) to dehydroquinate (DHQ). The protein is 3-dehydroquinate synthase of Francisella tularensis subsp. tularensis (strain FSC 198).